The chain runs to 251 residues: 5'-nucleotidase SurE (251 aa).

Positions 8, 9, 39, and 91 each coordinate a divalent metal cation.

Belongs to the SurE nucleotidase family. A divalent metal cation serves as cofactor.

Its subcellular location is the cytoplasm. It catalyses the reaction a ribonucleoside 5'-phosphate + H2O = a ribonucleoside + phosphate. Its function is as follows. Nucleotidase that shows phosphatase activity on nucleoside 5'-monophosphates. This Methylococcus capsulatus (strain ATCC 33009 / NCIMB 11132 / Bath) protein is 5'-nucleotidase SurE.